We begin with the raw amino-acid sequence, 538 residues long: Bifunctional purine biosynthesis protein PurH (538 aa).

Residues 6–158 (KHIPAPDLHR…KNHAYVATVV (153 aa)) form the MGS-like domain.

This sequence belongs to the PurH family.

It carries out the reaction (6R)-10-formyltetrahydrofolate + 5-amino-1-(5-phospho-beta-D-ribosyl)imidazole-4-carboxamide = 5-formamido-1-(5-phospho-D-ribosyl)imidazole-4-carboxamide + (6S)-5,6,7,8-tetrahydrofolate. The enzyme catalyses IMP + H2O = 5-formamido-1-(5-phospho-D-ribosyl)imidazole-4-carboxamide. Its pathway is purine metabolism; IMP biosynthesis via de novo pathway; 5-formamido-1-(5-phospho-D-ribosyl)imidazole-4-carboxamide from 5-amino-1-(5-phospho-D-ribosyl)imidazole-4-carboxamide (10-formyl THF route): step 1/1. It functions in the pathway purine metabolism; IMP biosynthesis via de novo pathway; IMP from 5-formamido-1-(5-phospho-D-ribosyl)imidazole-4-carboxamide: step 1/1. This Brucella abortus (strain S19) protein is Bifunctional purine biosynthesis protein PurH.